The following is a 258-amino-acid chain: UDP-N-acetylenolpyruvoylglucosamine reductase (258 aa).

Arg142 is a catalytic residue. Residue Ser184 is the Proton donor of the active site. Glu254 is a catalytic residue.

This sequence belongs to the MurB family. FAD is required as a cofactor.

It localises to the cytoplasm. The enzyme catalyses UDP-N-acetyl-alpha-D-muramate + NADP(+) = UDP-N-acetyl-3-O-(1-carboxyvinyl)-alpha-D-glucosamine + NADPH + H(+). It functions in the pathway cell wall biogenesis; peptidoglycan biosynthesis. Its function is as follows. Cell wall formation. The chain is UDP-N-acetylenolpyruvoylglucosamine reductase from Campylobacter jejuni subsp. jejuni serotype O:2 (strain ATCC 700819 / NCTC 11168).